Here is a 90-residue protein sequence, read N- to C-terminus: Phosphocarrier protein HPr (90 aa).

An HPr domain is found at 1–89; that stretch reads MPAREITIIN…ELINNFFDEG (89 aa). Catalysis depends on histidine 15, which acts as the Pros-phosphohistidine intermediate.

The protein belongs to the HPr family.

It localises to the cytoplasm. General (non sugar-specific) component of the phosphoenolpyruvate-dependent sugar phosphotransferase system (sugar PTS). This major carbohydrate active-transport system catalyzes the phosphorylation of incoming sugar substrates concomitantly with their translocation across the cell membrane. The phosphoryl group from phosphoenolpyruvate (PEP) is transferred to the phosphoryl carrier protein HPr by enzyme I. Phospho-HPr then transfers it to the PTS EIIA domain. This chain is Phosphocarrier protein HPr (ptsH), found in Pseudomonas putida (Arthrobacter siderocapsulatus).